A 112-amino-acid polypeptide reads, in one-letter code: Mitochondrial import inner membrane translocase subunit TIM14-1 (112 aa).

Position 2 is an N-acetylalanine (A2). A helical membrane pass occupies residues 7 to 23 (AGVAVAATALAGRYGIQ). A J domain is found at 53–112 (EAALILGVRESVAAEKVKEAHRKVMVANHPDAGGSHFLASKINEAKDVMLGKTKNSGSAF).

It belongs to the TIM14 family. In terms of assembly, probable component of the PAM complex at least composed of a mitochondrial HSP70 protein, TIMM44 and TIMM14. The complex interacts with the TIMM23 component of the TIM17:23 complex.

It localises to the mitochondrion. It is found in the mitochondrion inner membrane. Functionally, component of the PAM complex, a complex required for the translocation of transit peptide-containing proteins from the inner membrane into the mitochondrial matrix in an ATP-dependent manner. The protein is Mitochondrial import inner membrane translocase subunit TIM14-1 (TIM14-1) of Arabidopsis thaliana (Mouse-ear cress).